The following is a 64-amino-acid chain: DNA gyrase inhibitor YacG (64 aa).

The Zn(2+) site is built by cysteine 7, cysteine 10, cysteine 26, and cysteine 30. A disordered region spans residues 44 to 64 (SIPGEPVVIANDDYNNEESDY).

It belongs to the DNA gyrase inhibitor YacG family. Interacts with GyrB. Zn(2+) serves as cofactor.

Its function is as follows. Inhibits all the catalytic activities of DNA gyrase by preventing its interaction with DNA. Acts by binding directly to the C-terminal domain of GyrB, which probably disrupts DNA binding by the gyrase. This is DNA gyrase inhibitor YacG from Idiomarina loihiensis (strain ATCC BAA-735 / DSM 15497 / L2-TR).